Here is a 628-residue protein sequence, read N- to C-terminus: Probable alpha-L-arabinofuranosidase A (628 aa).

The signal sequence occupies residues 1–25 (MVAFSALSGVSALSLLLCLVQHAHG). N-linked (GlcNAc...) asparagine glycans are attached at residues Asn-36, Asn-51, Asn-74, Asn-152, Asn-171, Asn-260, Asn-359, and Asn-493.

It belongs to the glycosyl hydrolase 51 family.

The protein localises to the secreted. The enzyme catalyses Hydrolysis of terminal non-reducing alpha-L-arabinofuranoside residues in alpha-L-arabinosides.. Its pathway is glycan metabolism; L-arabinan degradation. Alpha-L-arabinofuranosidase involved in the degradation of arabinoxylan, a major component of plant hemicellulose. Acts only on small linear 1,5-alpha-linked L-arabinofuranosyl oligosaccharides. The protein is Probable alpha-L-arabinofuranosidase A (abfA) of Aspergillus awamori (Black koji mold).